Here is a 227-residue protein sequence, read N- to C-terminus: Ribosomal RNA large subunit methyltransferase E (227 aa).

Residues G78, W80, D103, D119, and D143 each contribute to the S-adenosyl-L-methionine site. K183 acts as the Proton acceptor in catalysis.

This sequence belongs to the class I-like SAM-binding methyltransferase superfamily. RNA methyltransferase RlmE family.

The protein resides in the cytoplasm. It catalyses the reaction uridine(2552) in 23S rRNA + S-adenosyl-L-methionine = 2'-O-methyluridine(2552) in 23S rRNA + S-adenosyl-L-homocysteine + H(+). Its function is as follows. Specifically methylates the uridine in position 2552 of 23S rRNA at the 2'-O position of the ribose in the fully assembled 50S ribosomal subunit. This is Ribosomal RNA large subunit methyltransferase E from Rickettsia peacockii (strain Rustic).